Here is a 270-residue protein sequence, read N- to C-terminus: Large ribosomal subunit protein uL10 (270 aa).

Residues 234 to 270 (VTELEAGKTRPKREGNRRQAMNGDEMDEDQSSDEDSD) are disordered. Residues 238-250 (EAGKTRPKREGNR) are compositionally biased toward basic and acidic residues. Positions 257–270 (DEMDEDQSSDEDSD) are enriched in acidic residues.

The protein belongs to the universal ribosomal protein uL10 family. In terms of assembly, associates with the pre-60S ribosomal particle.

The protein resides in the nucleus. Its subcellular location is the nucleolus. The protein localises to the cytoplasm. Component of the ribosome assembly machinery. Nuclear paralog of the ribosomal protein P0, it binds pre-60S subunits at an early stage of assembly in the nucleolus, and is replaced by P0 in cytoplasmic pre-60S subunits and mature 80S ribosomes. In Chaetomium thermophilum (strain DSM 1495 / CBS 144.50 / IMI 039719) (Thermochaetoides thermophila), this protein is Large ribosomal subunit protein uL10.